We begin with the raw amino-acid sequence, 185 residues long: Ribosome-recycling factor (185 aa).

The protein belongs to the RRF family.

The protein localises to the cytoplasm. Functionally, responsible for the release of ribosomes from messenger RNA at the termination of protein biosynthesis. May increase the efficiency of translation by recycling ribosomes from one round of translation to another. This Yersinia pseudotuberculosis serotype O:1b (strain IP 31758) protein is Ribosome-recycling factor.